A 196-amino-acid polypeptide reads, in one-letter code: Probable malonic semialdehyde reductase RutE (196 aa).

It belongs to the nitroreductase family. HadB/RutE subfamily. FMN serves as cofactor.

It carries out the reaction 3-hydroxypropanoate + NADP(+) = 3-oxopropanoate + NADPH + H(+). Functionally, may reduce toxic product malonic semialdehyde to 3-hydroxypropionic acid, which is excreted. The chain is Probable malonic semialdehyde reductase RutE from Klebsiella pneumoniae subsp. pneumoniae (strain ATCC 700721 / MGH 78578).